The primary structure comprises 648 residues: MAKRLVLFAAVVIALVALTTAEGEASRQLQCERELQESSLEACRQVVDQQLAGRLPWSTGLQMRCCQQLRDVSAKCRSVAVSQVARQYEQTVVPPKGGSFYPGETTPLQQLQQGIFWGTSSQTVQGYYPGVTSPRQGSYYPGQASPQQPGQGQQPGKWQEPGQGQQWYYPTSLQQPGQGQQIGKGQQGYYPTSLQQPGQGQQGYYPTSLQHTGQRQQPVQGQQPEQGQQPGQWQQGYYPTSPQQLGQGQQPRQWQQSGQGQQGHYPTSLQQPGQGQQGHYLASQQQPGQGQQGHYPASQQQPGQGQQGHYPASQQQPGQGQQGHYPASQQEPGQGQQGQIPASQQQPGQGQQGHYPASLQQPGQGQQGHYPTSLQQLGQGQQTGQPGQKQQPGQGQQTGQGQQPEQEQQPGQGQQGYYPTSLQQPGQGQQQGQGQQGYYPTSLQQPGQGQQGHYPASLQQPGQGQPGQRQQPGQGQHPEQGKQPGQGQQGYYPTSPQQPGQGQQLGQGQQGYYPTSPQQPGQGQQPGQGQQGHCPTSPQQSGQAQQPGQGQQIGQVQQPGQGQQGYYPTSVQQPGQGQQSGQGQQSGQGHQPGQGQQSGQEQQGYDSPYHVSAEQQAASPMVAKAQQPATQLPTVCRMEGGDALSASQ.

An N-terminal signal peptide occupies residues 1–21; the sequence is MAKRLVLFAAVVIALVALTTA. The disordered stretch occupies residues 127–648; the sequence is YYPGVTSPRQ…EGGDALSASQ (522 aa). 3 stretches are compositionally biased toward low complexity: residues 141-166, 195-236, and 243-263; these read PGQA…QGQQ, QQPG…WQQG, and QQLG…GQQG. Residues 264 to 274 show a composition bias toward polar residues; that stretch reads HYPTSLQQPGQ. Low complexity-rich tracts occupy residues 284–353, 360–416, 459–502, 510–523, and 531–565; these read QQQP…GQQG, QQPG…GQQG, QQPG…PGQG, QGYY…PGQG, and QGHC…GQQG. Over residues 578–592 the composition is skewed to gly residues; it reads QQSGQGQQSGQGHQP. Over residues 593–604 the composition is skewed to low complexity; it reads GQGQQSGQEQQG.

It belongs to the gliadin/glutenin family. In terms of assembly, disulfide-bridge linked aggregates.

Functionally, glutenins are high-molecular weight seed storage proteins of wheat endosperm. Thought to be responsible for the visco-elastic property of wheat dough. In Triticum aestivum (Wheat), this protein is Glutenin, high molecular weight subunit DY10 (GLU-D1-2B).